The following is a 781-amino-acid chain: Dual specificity protein kinase zakA (781 aa).

Protein kinase domains are found at residues tryptophan 9–isoleucine 317 and aspartate 379–leucine 654. ATP-binding positions include isoleucine 15 to valine 23 and lysine 44. Aspartate 132 (proton acceptor) is an active-site residue. The interval glutamate 168–asparagine 209 is disordered. Residues asparagine 171–asparagine 209 show a composition bias toward low complexity. ATP-binding positions include glycine 385–valine 393 and lysine 406. The Proton acceptor role is filled by aspartate 507.

It in the N-terminal section; belongs to the protein kinase superfamily. Ser/Thr protein kinase family. The protein in the C-terminal section; belongs to the protein kinase superfamily. TKL Tyr protein kinase family. Post-translationally, N-terminal serine/threonine domain is capable of autophosphorylation, in vitro, but to a lower extent than the tyrosine kinase domain. May function as a negative regulator of the tyrosine kinase domain. In terms of processing, C-terminal tyrosine kinase domain is capable of autophosphorylation, in vitro. ZakA and zak2 are coexpressed in prestalk cell population, zakA is enriched in pstB populations and zak1 in pstA populations. ZakA and zak2 are coexpressed in prespore cells, zakA expression levels are 10 fold higher than zak2.

It catalyses the reaction L-seryl-[protein] + ATP = O-phospho-L-seryl-[protein] + ADP + H(+). The catalysed reaction is L-threonyl-[protein] + ATP = O-phospho-L-threonyl-[protein] + ADP + H(+). The enzyme catalyses L-tyrosyl-[protein] + ATP = O-phospho-L-tyrosyl-[protein] + ADP + H(+). Functionally, positive regulator of gsk3/gskA activity required for cell pattern formation and a downstream effector of carC. The kinases, gsk3/gskA, zakA and zak2, form part of a signaling pathway that responds to extracellular cyclic AMP. The pathway has a role in transcriptional regulation; required to direct prespore/spore fates during development. ZakA negatively regulates prestalk differentiation by regulating expression of ecmB. Phosphorylates Y-214 of gsk3/gskA, in vitro. The protein is Dual specificity protein kinase zakA (zakA) of Dictyostelium discoideum (Social amoeba).